Consider the following 107-residue polypeptide: DNA-directed RNA polymerase subunit omega (107 aa).

Belongs to the RNA polymerase subunit omega family. As to quaternary structure, the RNAP catalytic core consists of 2 alpha, 1 beta, 1 beta' and 1 omega subunit. When a sigma factor is associated with the core the holoenzyme is formed, which can initiate transcription.

The catalysed reaction is RNA(n) + a ribonucleoside 5'-triphosphate = RNA(n+1) + diphosphate. Its function is as follows. Promotes RNA polymerase assembly. Latches the N- and C-terminal regions of the beta' subunit thereby facilitating its interaction with the beta and alpha subunits. This is DNA-directed RNA polymerase subunit omega from Oenococcus oeni (strain ATCC BAA-331 / PSU-1).